A 589-amino-acid chain; its full sequence is L-fucose isomerase (589 aa).

Catalysis depends on proton acceptor residues E340 and D364. 3 residues coordinate Mn(2+): E340, D364, and H527.

This sequence belongs to the L-fucose isomerase family. Mn(2+) serves as cofactor.

The protein localises to the cytoplasm. The catalysed reaction is L-fucose = L-fuculose. The protein operates within carbohydrate degradation; L-fucose degradation; L-lactaldehyde and glycerone phosphate from L-fucose: step 1/3. Converts the aldose L-fucose into the corresponding ketose L-fuculose. The sequence is that of L-fucose isomerase from Haemophilus influenzae (strain ATCC 51907 / DSM 11121 / KW20 / Rd).